Reading from the N-terminus, the 1367-residue chain is Paired amphipathic helix protein Sin3-like 2 (1367 aa).

The interval 14-44 (QFKRPLGSSRGESYEQSPITGGGSIGEGGIN) is disordered. A compositionally biased stretch (gly residues) spans 33–42 (TGGGSIGEGG). PAH domains are found at residues 46-116 (QKLT…LPKG) and 130-200 (KTVE…LPDS). Positions 212-322 (SQAQRYDDRG…EAYSGPASHS (111 aa)) are disordered. 2 stretches are compositionally biased toward basic and acidic residues: residues 230–286 (MFME…SRDL) and 299–311 (FSEK…RMEG). The region spanning 327 to 396 (LKSMYNQAFL…DEFNQFFERC (70 aa)) is the PAH 3 domain. Disordered regions lie at residues 417 to 446 (EENL…KERS), 786 to 883 (DVHA…LSKP), 912 to 946 (QSDT…DSED), and 958 to 1031 (ATAK…EGME). 2 stretches are compositionally biased toward basic and acidic residues: residues 424–446 (VKGE…KERS) and 806–819 (SSGK…DLAN). 2 stretches are compositionally biased toward polar residues: residues 851-876 (ATSS…SSGS) and 912-923 (QSDTSKANSNYD). The segment covering 958–967 (ATAKTEHSVE) has biased composition (basic and acidic residues). 2 stretches are compositionally biased toward acidic residues: residues 968–989 (AEGE…EAGE) and 997–1016 (IGDE…EHDE). Ser1023 is subject to Phosphoserine.

The protein localises to the nucleus. In terms of biological role, acts as a transcriptional repressor. Plays roles in regulating gene expression and genome stability. The sequence is that of Paired amphipathic helix protein Sin3-like 2 (SNL2) from Arabidopsis thaliana (Mouse-ear cress).